Consider the following 706-residue polypeptide: Polycomb protein SCMH1 (706 aa).

MBT repeat units follow at residues 28 to 126 (FTWD…LQPP) and 134 to 235 (SSWP…LQPP). 2 disordered regions span residues 233-350 (QPPG…TVPS) and 576-595 (GSDR…RDPS). Basic residues-rich tracts occupy residues 272 to 283 (RGRKPGKKRGRT) and 304 to 319 (FPKK…RKPR). Residues 329–340 (PTTSTPEPDTST) show a composition bias toward low complexity. The segment covering 576-591 (GSDRHLESRDPPRLSG) has biased composition (basic and acidic residues). The SAM domain occupies 597 to 662 (WTVEDVMQFV…SFHIDRLKQV (66 aa)).

The protein belongs to the SCM family. As to quaternary structure, associates with a PRC1-like complex. Interacts with the SAM domain of PHC1 via its SAM domain in vitro. In terms of tissue distribution, most abundant in testis. Moderate levels detected in heart, brain, lung, liver, skeletal muscle and kidney and lower levels in spleen.

The protein resides in the nucleus. Functionally, associates with Polycomb group (PcG) multiprotein complexes; the complex class is required to maintain the transcriptionally repressive state of some genes. This Mus musculus (Mouse) protein is Polycomb protein SCMH1.